A 387-amino-acid polypeptide reads, in one-letter code: Mannitol-1-phosphate 5-dehydrogenase (387 aa).

An NAD(+)-binding site is contributed by 3-14; it reads ALHFGAGNIGRG.

This sequence belongs to the mannitol dehydrogenase family.

The catalysed reaction is D-mannitol 1-phosphate + NAD(+) = beta-D-fructose 6-phosphate + NADH + H(+). The polypeptide is Mannitol-1-phosphate 5-dehydrogenase (Yersinia pestis bv. Antiqua (strain Antiqua)).